Consider the following 70-residue polypeptide: Disintegrin triflavin (70 aa).

Residues glycine 1–leucine 70 enclose the Disintegrin domain. Disulfide bonds link cysteine 4-cysteine 19, cysteine 6-cysteine 14, cysteine 13-cysteine 36, cysteine 27-cysteine 33, cysteine 32-cysteine 57, and cysteine 45-cysteine 64. Positions arginine 49–aspartate 51 match the Cell attachment site motif.

The protein belongs to the venom metalloproteinase (M12B) family. P-II subfamily. P-IIa sub-subfamily. Monomer. As to expression, expressed by the venom gland.

The protein resides in the secreted. Functionally, inhibits fibrinogen interaction with platelets. Acts by binding to alpha-IIb/beta-3 (ITGA2B/ITGB3) on the platelet surface and inhibits aggregation induced by ADP, thrombin, platelet-activating factor and collagen. The protein is Disintegrin triflavin of Protobothrops flavoviridis (Habu).